The following is a 564-amino-acid chain: 2-succinyl-5-enolpyruvyl-6-hydroxy-3-cyclohexene-1-carboxylate synthase (564 aa).

It belongs to the TPP enzyme family. MenD subfamily. In terms of assembly, homodimer. The cofactor is Mg(2+). Mn(2+) serves as cofactor. Thiamine diphosphate is required as a cofactor.

The enzyme catalyses isochorismate + 2-oxoglutarate + H(+) = 5-enolpyruvoyl-6-hydroxy-2-succinyl-cyclohex-3-ene-1-carboxylate + CO2. Its pathway is quinol/quinone metabolism; 1,4-dihydroxy-2-naphthoate biosynthesis; 1,4-dihydroxy-2-naphthoate from chorismate: step 2/7. It participates in quinol/quinone metabolism; menaquinone biosynthesis. Catalyzes the thiamine diphosphate-dependent decarboxylation of 2-oxoglutarate and the subsequent addition of the resulting succinic semialdehyde-thiamine pyrophosphate anion to isochorismate to yield 2-succinyl-5-enolpyruvyl-6-hydroxy-3-cyclohexene-1-carboxylate (SEPHCHC). The polypeptide is 2-succinyl-5-enolpyruvyl-6-hydroxy-3-cyclohexene-1-carboxylate synthase (Vibrio vulnificus (strain YJ016)).